Here is a 361-residue protein sequence, read N- to C-terminus: Probable dual-specificity RNA methyltransferase RlmN (361 aa).

Glu-91 acts as the Proton acceptor in catalysis. The 233-residue stretch at 97-329 (QHYGLSVCVT…KKKGVNCVVR (233 aa)) folds into the Radical SAM core domain. A disulfide bridge links Cys-104 with Cys-340. Positions 111, 115, and 118 each coordinate [4Fe-4S] cluster. S-adenosyl-L-methionine-binding positions include 163-164 (GE), Ser-195, 218-220 (SLH), and Asn-296. The active-site S-methylcysteine intermediate is Cys-340.

The protein belongs to the radical SAM superfamily. RlmN family. [4Fe-4S] cluster serves as cofactor.

It is found in the cytoplasm. It carries out the reaction adenosine(2503) in 23S rRNA + 2 reduced [2Fe-2S]-[ferredoxin] + 2 S-adenosyl-L-methionine = 2-methyladenosine(2503) in 23S rRNA + 5'-deoxyadenosine + L-methionine + 2 oxidized [2Fe-2S]-[ferredoxin] + S-adenosyl-L-homocysteine. The catalysed reaction is adenosine(37) in tRNA + 2 reduced [2Fe-2S]-[ferredoxin] + 2 S-adenosyl-L-methionine = 2-methyladenosine(37) in tRNA + 5'-deoxyadenosine + L-methionine + 2 oxidized [2Fe-2S]-[ferredoxin] + S-adenosyl-L-homocysteine. In terms of biological role, specifically methylates position 2 of adenine 2503 in 23S rRNA and position 2 of adenine 37 in tRNAs. The polypeptide is Probable dual-specificity RNA methyltransferase RlmN (Streptococcus pneumoniae serotype 19F (strain G54)).